Reading from the N-terminus, the 48-residue chain is Large ribosomal subunit protein bL34 (48 aa).

Belongs to the bacterial ribosomal protein bL34 family.

The chain is Large ribosomal subunit protein bL34 (rpmH) from Mycoplasma pneumoniae (strain ATCC 29342 / M129 / Subtype 1) (Mycoplasmoides pneumoniae).